Here is a 261-residue protein sequence, read N- to C-terminus: Zinc finger protein 664 (261 aa).

9 consecutive C2H2-type zinc fingers follow at residues 3–25 (YKCP…QKIH), 31–53 (HKCD…WRDH), 59–81 (YKCD…KKIH), 87–109 (YKCY…MRVH), 115–137 (YVCS…QRVH), 143–165 (FKCE…QRVH), 171–193 (YKCY…QRVH), 199–221 (YRCC…QRVH), and 227–249 (FKCD…QRVH). Residue lysine 257 forms a Glycyl lysine isopeptide (Lys-Gly) (interchain with G-Cter in SUMO2) linkage.

This sequence belongs to the krueppel C2H2-type zinc-finger protein family.

It localises to the nucleus. In terms of biological role, may be involved in transcriptional regulation. The sequence is that of Zinc finger protein 664 from Homo sapiens (Human).